The sequence spans 276 residues: Undecaprenyl-diphosphatase 1 (276 aa).

5 helical membrane passes run 85–105 (MNVV…EKTI), 108–128 (VLFA…VILW), 187–207 (VATE…TLYE), 217–237 (VDSI…AFAC), and 253–273 (FAWY…SGWI).

The protein belongs to the UppP family.

It localises to the cell inner membrane. It carries out the reaction di-trans,octa-cis-undecaprenyl diphosphate + H2O = di-trans,octa-cis-undecaprenyl phosphate + phosphate + H(+). Catalyzes the dephosphorylation of undecaprenyl diphosphate (UPP). Confers resistance to bacitracin. The chain is Undecaprenyl-diphosphatase 1 from Burkholderia thailandensis (strain ATCC 700388 / DSM 13276 / CCUG 48851 / CIP 106301 / E264).